The sequence spans 262 residues: tRNA pseudouridine synthase A (262 aa).

The active-site Nucleophile is Asp-52. Tyr-103 lines the substrate pocket.

Belongs to the tRNA pseudouridine synthase TruA family.

The enzyme catalyses uridine(38/39/40) in tRNA = pseudouridine(38/39/40) in tRNA. In terms of biological role, formation of pseudouridine at positions 38, 39 and 40 in the anticodon stem and loop of transfer RNAs. In Methanococcus maripaludis (strain DSM 14266 / JCM 13030 / NBRC 101832 / S2 / LL), this protein is tRNA pseudouridine synthase A.